The primary structure comprises 153 residues: Interleukin-17A (153 aa).

Positions 1-23 (MASMRTSSMSLLLLLSLVALVKA) are cleaved as a signal peptide. An N-linked (GlcNAc...) asparagine glycan is attached at N53. Residues 56–76 (TNSRRPTDYHKRSTSPWTLHR) are disordered. 2 disulfide bridges follow: C92–C142 and C97–C144.

It belongs to the IL-17 family. In terms of assembly, homodimer. Forms complexes with IL17RA and IL17RC receptors with 2:1 binding stoichiometry: two receptor chains for one interleukin molecule. IL17A homodimer preferentially drives the formation of IL17RA-IL17RC heterodimeric receptor complex. IL17A homodimer adopts an asymmetrical ternary structure with one IL17RA molecule, allowing for high affinity interactions of one IL17A monomer with one IL17RA molecule (via D1 and D2 domains), while disfavoring binding of a second IL17RA molecule on the other IL17A monomer. Heterodimer with IL17F. IL17A-IL17F forms complexes with IL17RA-IL17RC, but with lower affinity when compared to IL17A homodimer. IL17RA and IL17RC chains cannot distinguish between IL17A and IL17F molecules, potentially enabling the formation of topologically distinct complexes.

Its subcellular location is the secreted. Its function is as follows. Effector cytokine of innate and adaptive immune system involved in antimicrobial host defense and maintenance of tissue integrity. Signals via IL17RA-IL17RC heterodimeric receptor complex, triggering homotypic interaction of IL17RA and IL17RC chains with TRAF3IP2 adapter. This leads to downstream TRAF6-mediated activation of NF-kappa-B and MAPkinase pathways ultimately resulting in transcriptional activation of cytokines, chemokines, antimicrobial peptides and matrix metalloproteinases, with potential strong immune inflammation. Plays an important role in connecting T cell-mediated adaptive immunity and acute inflammatory response to destroy extracellular bacteria and fungi. As a signature effector cytokine of T-helper 17 cells (Th17), primarily induces neutrophil activation and recruitment at infection and inflammatory sites. In airway epithelium, mediates neutrophil chemotaxis via induction of CXCL1 and CXCL5 chemokines. In secondary lymphoid organs, contributes to germinal center formation by regulating the chemotactic response of B cells to CXCL12 and CXCL13, enhancing retention of B cells within the germinal centers, B cell somatic hypermutation rate and selection toward plasma cells. Effector cytokine of a subset of gamma-delta T cells that functions as part of an inflammatory circuit downstream IL1B, TLR2 and IL23A-IL12B to promote neutrophil recruitment for efficient bacterial clearance. Effector cytokine of innate immune cells including invariant natural killer cell (iNKT) and group 3 innate lymphoid cells that mediate initial neutrophilic inflammation. Involved in the maintenance of the integrity of epithelial barriers during homeostasis and pathogen infection. Upon acute injury, has a direct role in epithelial barrier formation by regulating OCLN localization and tight junction biogenesis. As part of the mucosal immune response induced by commensal bacteria, enhances host's ability to resist pathogenic bacterial and fungal infections by promoting neutrophil recruitment and antimicrobial peptides release. In synergy with IL17F, mediates the production of antimicrobial beta-defensins DEFB1, DEFB103A, and DEFB104A by mucosal epithelial cells, limiting the entry of microbes through the epithelial barriers. Involved in antiviral host defense through various mechanisms. Enhances immunity against West Nile virus by promoting T cell cytotoxicity. May play a beneficial role in influenza A virus (H5N1) infection by enhancing B cell recruitment and immune response in the lung. Contributes to influenza A virus (H1N1) clearance by driving the differentiation of B-1a B cells, providing for production of virus-specific IgM antibodies at first line of host defense. In Bos taurus (Bovine), this protein is Interleukin-17A (IL17A).